Reading from the N-terminus, the 934-residue chain is Protein unc-45 homolog B (934 aa).

TPR repeat units lie at residues 9 to 42 (SVQL…CKKE), 48 to 81 (AVIY…DAAD), and 83 to 115 (KALY…EPKN). 3 ARM repeats span residues 174 to 213 (DAGA…GMCT), 216 to 255 (RARA…CVND), and 753 to 792 (DKLR…NLVC).

As to quaternary structure, interacts with apobec2a, apobec2b, hsp90a.1, hsp90a.2, hsp90ab1 and myosin. In terms of tissue distribution, expressed in striated muscle tissue including somites, heart and craniofacial muscle. Detected in mesoderm adjacent to the dorsal midline during the late gastrula stages and in somitic mesoderm during development of trunk skeletal muscle. Also expressed in cranial skeletal muscle and in cardiac and smooth muscle. Detected in somitic muscle and heart primordium of 24 hour embryos. At later stages, expressed in muscles of pectoral fins, jaw, branchial arches and eye.

The protein resides in the cytoplasm. It is found in the myofibril. Its subcellular location is the sarcomere. The protein localises to the z line. It localises to the a band. The protein resides in the perinuclear region. Functionally, acts as a co-chaperone for HSP90 and is required for proper folding of the myosin motor domain. Plays a role in sarcomere formation during muscle cell development. Required for myoseptal integrity, myofiber attachment, motility and craniofacial development. Is necessary for normal early lens development. The protein is Protein unc-45 homolog B of Danio rerio (Zebrafish).